The following is a 638-amino-acid chain: 3D-(3,5/4)-trihydroxycyclohexane-1,2-dione hydrolase (638 aa).

E67 provides a ligand contact to thiamine diphosphate. Residues 442-523 form a thiamine pyrophosphate binding region; sequence SLPGDLQRLW…INIMLFDNSG (82 aa). The Mg(2+) site is built by D494 and N521.

It belongs to the TPP enzyme family. Mg(2+) is required as a cofactor. The cofactor is thiamine diphosphate.

It catalyses the reaction 3D-3,5/4-trihydroxycyclohexane-1,2-dione + H2O = 5-deoxy-D-glucuronate + H(+). It functions in the pathway polyol metabolism; myo-inositol degradation into acetyl-CoA; acetyl-CoA from myo-inositol: step 3/7. In terms of biological role, involved in the cleavage of the C1-C2 bond of 3D-(3,5/4)-trihydroxycyclohexane-1,2-dione (THcHDO) to yield 5-deoxy-glucuronate (5DG). In Listeria innocua serovar 6a (strain ATCC BAA-680 / CLIP 11262), this protein is 3D-(3,5/4)-trihydroxycyclohexane-1,2-dione hydrolase.